The chain runs to 1396 residues: ABC-type transporter cicA (1396 aa).

The disordered stretch occupies residues 1-40; it reads MRLSSEAKIAESGGQPPTAGSRSETGSESTEAESADPKAQ. The span at 18-29 shows a compositional bias: low complexity; that stretch reads TAGSRSETGSES. Helical transmembrane passes span 142–162, 191–211, and 300–320; these read FLLGGFCHLISSLLIVFAPYL, GFVVGITVMQAIQSLCTNQFL, and MFHISWTAPVSIIVALILLLV. An ABC transmembrane type-1 1 domain is found at 143 to 466; the sequence is LLGGFCHLIS…LPLVLGQITD (324 aa). N321 carries N-linked (GlcNAc...) asparagine glycosylation. The next 3 helical transmembrane spans lie at 324–344, 409–429, and 440–460; these read YSALAGFGLLVIGMPFLTYAV, ILCVSMAIPVFASMLSFITYA, and IFSSLALFNSLRMPLNLLPLV. Residues 510-533 show a composition bias toward basic and acidic residues; it reads AADKEAEKVEKKANPRRTEPKSEA. The interval 510-543 is disordered; it reads AADKEAEKVEKKANPRRTEPKSEAPTDSAESDEP. An ABC transporter 1 domain is found at 525 to 751; it reads RRTEPKSEAP…NDLFKQLMST (227 aa). 563-570 serves as a coordination point for ATP; it reads GTVGSGKS. The N-linked (GlcNAc...) asparagine glycan is linked to N604. The tract at residues 751–787 is disordered; that stretch reads TASQDSKEDEEEATEVVEEEAEKQAQQEPTKPAAALM. Acidic residues predominate over residues 757-771; the sequence is KEDEEEATEVVEEEA. Transmembrane regions (helical) follow at residues 816 to 836 and 852 to 872; these read LAILFLLAFANVVNVWTNLWL and YIGIYAGLGAGSALTMFIFST. The ABC transmembrane type-1 2 domain occupies 816-1093; that stretch reads LAILFLLAFA…TVRQLAEVEN (278 aa). The N-linked (GlcNAc...) asparagine glycan is linked to N880. 4 helical membrane passes run 930 to 947, 951 to 970, 1036 to 1056, and 1065 to 1085; these read MYAITITMIVSIMILIIV, YFAIALVPLFLLFLTASNYY, LSVRLDAVAVLLVFVTGVLVV, and SISGLVLSYILAIAQMLQFTV. N1096, N1150, and N1154 each carry an N-linked (GlcNAc...) asparagine glycan. One can recognise an ABC transporter 2 domain in the interval 1131 to 1380; that stretch reads ITFDNVAMRY…EDGIFRAMCE (250 aa). 1165 to 1172 is an ATP binding site; it reads GRTGAGKS.

The protein belongs to the ABC transporter superfamily. ABCC family. Conjugate transporter (TC 3.A.1.208) subfamily.

Its subcellular location is the cell membrane. In terms of biological role, ABC-type transporter; part of the gene cluster that mediates the biosynthesis of cichorine, a phytotoxin active against knapweed, corn, and soybeans. CicA is probably involved in the secretion of cichorine. This is ABC-type transporter cicA from Emericella nidulans (strain FGSC A4 / ATCC 38163 / CBS 112.46 / NRRL 194 / M139) (Aspergillus nidulans).